The chain runs to 130 residues: Serum amyloid A protein (130 aa).

An N-terminal signal peptide occupies residues 1–18 (MKLFTGLILCSLVLGVHS). Gln19 is modified (pyrrolidone carboxylic acid). Residues 86–130 (TDPLFKGTTSGQGQEDSRADQAANEWGRSGKDPNHFRPAGLPDKY) form a disordered region.

It belongs to the SAA family. Post-translationally, this protein is the precursor of amyloid protein A, which is formed by the removal of residues from the C-terminal end. In terms of tissue distribution, expressed by the liver; secreted in plasma.

It is found in the secreted. Major acute phase reactant. Apolipoprotein of the HDL complex. The polypeptide is Serum amyloid A protein (SAA1) (Bos taurus (Bovine)).